The sequence spans 157 residues: Transcription elongation factor GreA (157 aa).

The protein belongs to the GreA/GreB family.

Necessary for efficient RNA polymerase transcription elongation past template-encoded arresting sites. The arresting sites in DNA have the property of trapping a certain fraction of elongating RNA polymerases that pass through, resulting in locked ternary complexes. Cleavage of the nascent transcript by cleavage factors such as GreA or GreB allows the resumption of elongation from the new 3'terminus. GreA releases sequences of 2 to 3 nucleotides. The chain is Transcription elongation factor GreA from Bartonella tribocorum (strain CIP 105476 / IBS 506).